The sequence spans 295 residues: Xyloglucan endotransglucosylase/hydrolase (295 aa).

The first 23 residues, 1-23 (MAVSSTPWALVALFLMASSTVMA), serve as a signal peptide directing secretion. Residues 25-222 (PPRKAIDVPF…WANAPFIASY (198 aa)) form the GH16 domain. Glutamate 108 (nucleophile) is an active-site residue. Glutamate 112 (proton donor) is an active-site residue. Glutamate 112 lines the xyloglucan pocket. A glycan (N-linked (GlcNAc...) asparagine) is linked at asparagine 116. Xyloglucan is bound by residues 125-127 (QTN), 135-137 (NRE), 201-202 (DW), and glycine 206. 2 disulfide bridges follow: cysteine 230-cysteine 239 and cysteine 276-cysteine 289. Arginine 281 serves as a coordination point for xyloglucan.

It belongs to the glycosyl hydrolase 16 family. XTH group 1 subfamily. Post-translationally, contains at least one intrachain disulfide bond essential for its enzymatic activity. The N-glycan consists of an (GlcNAc)2(Hex)6 oligosaccharide; not essential for its enzymatic activity.

It localises to the secreted. The protein resides in the cell wall. The protein localises to the extracellular space. It is found in the apoplast. It catalyses the reaction breaks a beta-(1-&gt;4) bond in the backbone of a xyloglucan and transfers the xyloglucanyl segment on to O-4 of the non-reducing terminal glucose residue of an acceptor, which can be a xyloglucan or an oligosaccharide of xyloglucan.. Functionally, catalyzes xyloglucan endohydrolysis (XEH) and/or endotransglycosylation (XET). Cleaves and religates xyloglucan polymers, an essential constituent of the primary cell wall, and thereby participates in cell wall construction of growing tissues. This is Xyloglucan endotransglucosylase/hydrolase (XET16A) from Brassica oleracea var. botrytis (Cauliflower).